The sequence spans 438 residues: Putative cytochrome P450 140 (438 aa).

Cys-381 is a heme binding site.

It belongs to the cytochrome P450 family. Requires heme as cofactor.

The chain is Putative cytochrome P450 140 (cyp140) from Mycobacterium bovis (strain ATCC BAA-935 / AF2122/97).